Here is a 180-residue protein sequence, read N- to C-terminus: Succinate dehydrogenase cytochrome B subunit, mitochondrial (180 aa).

Residues 1–82 (MFATRSFCLS…WYLSSLHRIT (82 aa)) lie on the Mitochondrial matrix side of the membrane. The chain crosses the membrane as a helical span at residues 83–103 (GCVVAGTLYAFAMGYLVAPLA). The Mitochondrial intermembrane segment spans residues 104–122 (GYSLDTATISGLIQQVPTW). The chain crosses the membrane as a helical span at residues 123–143 (IKVPAKFVISYPLTFHIFNGI). Heme is bound at residue His-138. Residues 144-159 (RHLIWDTTKELSLKGV) lie on the Mitochondrial matrix side of the membrane. The helical transmembrane segment at 160–180 (YRTGYAVLALSVLTSGYFAMI) threads the bilayer.

Belongs to the cytochrome b560 family. In terms of assembly, forms part of complex II containing four subunits: a 70 kDa flavoprotein (FP), a 27 kDa iron-sulfur protein (IP), a cytochrome B and a membrane-anchoring protein. The cofactor is heme.

Its subcellular location is the mitochondrion inner membrane. Its pathway is carbohydrate metabolism; tricarboxylic acid cycle. Its function is as follows. Membrane-anchoring subunit of succinate dehydrogenase (SDH) that is involved in complex II of the mitochondrial electron transport chain and is responsible for transferring electrons from succinate to ubiquinone (coenzyme Q). This chain is Succinate dehydrogenase cytochrome B subunit, mitochondrial (sdh3), found in Schizosaccharomyces pombe (strain 972 / ATCC 24843) (Fission yeast).